Here is a 1364-residue protein sequence, read N- to C-terminus: Serine protease SepA autotransporter (1364 aa).

The first 56 residues, 1–56 (MNKIYYLKYCHITKSLIAVSELARRVTCKSHRRLSRRVILTSVAALSLSSAWPALS), serve as a signal peptide directing secretion. In terms of domain architecture, Peptidase S6 spans 57 to 307 (ATVSAEIPYQ…VVTTQDFLGQ (251 aa)). Residues His-134, Asp-162, and Ser-267 each act as charge relay system in the active site. An Autotransporter domain is found at 1098 to 1364 (DTQGDAGVWA…AINANFRYVF (267 aa)).

In terms of processing, cleaved to release the mature protein from the outer membrane. Cleavage is performed by an unknown protease.

The protein resides in the periplasm. It localises to the secreted. The protein localises to the cell surface. Its subcellular location is the cell outer membrane. With respect to regulation, inhibited by the serine protease inhibitor PMSF, but not by benzamidine, alpha 1-antitrypsin, alpha 1-antichymotrypsin. Not inhibited by metalloprotease inhibitors such as EDTA and orthophenanthroline. Its function is as follows. Major protein secreted in laboratory media showing proteolytic activity. May be involved in invasion and destruction of host intestinal epithelium. The protein is Serine protease SepA autotransporter (sepA) of Shigella flexneri.